Reading from the N-terminus, the 97-residue chain is Single insulin-like growth factor-binding domain protein-1 (97 aa).

Residues 1–19 (MKTLFVFAVGIMLSMRASA) form the signal peptide. An IGFBP N-terminal domain is found at 20–96 (FTCPECRPEL…PEIVGTCVKI (77 aa)). Threonine 21 is a glycosylation site (O-linked (GalNAc...) threonine). Intrachain disulfides connect cysteine 22-cysteine 45, cysteine 25-cysteine 47, cysteine 30-cysteine 48, cysteine 36-cysteine 51, cysteine 59-cysteine 75, and cysteine 69-cysteine 93.

Expressed in hemocytes.

Its subcellular location is the secreted. In terms of biological role, has a role in the innate immune system. The polypeptide is Single insulin-like growth factor-binding domain protein-1 (Cupiennius salei (American wandering spider)).